The primary structure comprises 634 residues: Probable potassium transport system protein Kup (634 aa).

A run of 12 helical transmembrane segments spans residues 21-41 (LVIGAIGVVFGDIGTSPLYTL), 58-78 (VLGILSLVFWALMLVVTLKYV), 110-130 (MYVVGILGIFGASLFFGDGVI), 152-172 (PFVVPITLVVLGMLFLAQRFG), 179-199 (AFGPITLLWFFALGAIGVYNM), 223-243 (WHAVFVLGAVVLAVTGGEALY), 258-278 (WQFVVLPMLTLTYLGQGALML), 296-316 (ALYPMIVLATAATVIASQALI), 348-368 (IYVPAVNWCLLALVAVAVIGF), 377-397 (AYGVSVTGTMLITTVLMIIYA), 403-423 (VPAPLLWLFALVFLAVDCAFF), and 427-447 (IIKFLDGAWFPLLLGLILFTL).

The protein belongs to the HAK/KUP transporter (TC 2.A.72) family.

The protein resides in the cell inner membrane. It carries out the reaction K(+)(in) + H(+)(in) = K(+)(out) + H(+)(out). In terms of biological role, transport of potassium into the cell. Likely operates as a K(+):H(+) symporter. The protein is Probable potassium transport system protein Kup of Xanthomonas euvesicatoria pv. vesicatoria (strain 85-10) (Xanthomonas campestris pv. vesicatoria).